Consider the following 64-residue polypeptide: Large ribosomal subunit protein bL33c (64 aa).

Belongs to the bacterial ribosomal protein bL33 family.

Its subcellular location is the plastid. The protein resides in the chloroplast. The chain is Large ribosomal subunit protein bL33c (rpl33) from Trieres chinensis (Marine centric diatom).